Here is a 48-residue protein sequence, read N- to C-terminus: Large ribosomal subunit protein bL33B (48 aa).

This sequence belongs to the bacterial ribosomal protein bL33 family.

This Mycoplasma genitalium (strain ATCC 33530 / DSM 19775 / NCTC 10195 / G37) (Mycoplasmoides genitalium) protein is Large ribosomal subunit protein bL33B (rpmG2).